Consider the following 145-residue polypeptide: UPF0260 protein VV2402 (145 aa).

The protein belongs to the UPF0260 family.

This chain is UPF0260 protein VV2402, found in Vibrio vulnificus (strain YJ016).